Here is a 380-residue protein sequence, read N- to C-terminus: Crotonobetainyl-CoA reductase (380 aa).

The protein belongs to the acyl-CoA dehydrogenase family. Homotetramer. Requires FAD as cofactor.

The protein resides in the cytoplasm. It catalyses the reaction 4-(trimethylamino)butanoyl-CoA + oxidized [electron-transfer flavoprotein] + H(+) = crotonobetainyl-CoA + reduced [electron-transfer flavoprotein]. It functions in the pathway amine and polyamine metabolism; carnitine metabolism. Its function is as follows. Catalyzes the reduction of crotonobetainyl-CoA to gamma-butyrobetainyl-CoA. The polypeptide is Crotonobetainyl-CoA reductase (Salmonella typhi).